Consider the following 903-residue polypeptide: Translation initiation factor IF-2 (903 aa).

The disordered stretch occupies residues 49–314 (LNREHGSGPD…GSSLQQGFNK (266 aa)). Residues 68–82 (STLNIQGTGGKSKSV) show a composition bias toward polar residues. Basic and acidic residues-rich tracts occupy residues 93-163 (VKRD…EAAE) and 174-225 (EVSK…ENAT). A compositionally biased stretch (basic residues) spans 265–279 (GRARPAKVARQKKSN). A compositionally biased stretch (basic and acidic residues) spans 280 to 293 (KHSESKADREEARA). In terms of domain architecture, tr-type G spans 402–571 (PRAPVVTIMG…LLQSEVLELK (170 aa)). Residues 411 to 418 (GHVDHGKT) are G1. 411-418 (GHVDHGKT) is a GTP binding site. The segment at 436–440 (GITQH) is G2. Residues 457–460 (DTPG) form a G3 region. Residues 457-461 (DTPGH) and 511-514 (NKID) each bind GTP. Positions 511–514 (NKID) are G4. Positions 547–549 (SAK) are G5.

It belongs to the TRAFAC class translation factor GTPase superfamily. Classic translation factor GTPase family. IF-2 subfamily.

It localises to the cytoplasm. One of the essential components for the initiation of protein synthesis. Protects formylmethionyl-tRNA from spontaneous hydrolysis and promotes its binding to the 30S ribosomal subunits. Also involved in the hydrolysis of GTP during the formation of the 70S ribosomal complex. The polypeptide is Translation initiation factor IF-2 (Cronobacter sakazakii (strain ATCC BAA-894) (Enterobacter sakazakii)).